Reading from the N-terminus, the 436-residue chain is NADH-quinone oxidoreductase subunit D 1 (436 aa).

This sequence belongs to the complex I 49 kDa subunit family. NDH-1 is composed of 14 different subunits. Subunits NuoB, C, D, E, F, and G constitute the peripheral sector of the complex.

It is found in the cell inner membrane. It carries out the reaction a quinone + NADH + 5 H(+)(in) = a quinol + NAD(+) + 4 H(+)(out). Functionally, NDH-1 shuttles electrons from NADH, via FMN and iron-sulfur (Fe-S) centers, to quinones in the respiratory chain. The immediate electron acceptor for the enzyme in this species is believed to be ubiquinone. Couples the redox reaction to proton translocation (for every two electrons transferred, four hydrogen ions are translocated across the cytoplasmic membrane), and thus conserves the redox energy in a proton gradient. This chain is NADH-quinone oxidoreductase subunit D 1, found in Stenotrophomonas maltophilia (strain R551-3).